Consider the following 170-residue polypeptide: NADH-dependent flavin reductase StyB (170 aa).

The protein belongs to the non-flavoprotein flavin reductase family. In terms of assembly, homodimer.

The catalysed reaction is a reduced flavin + NAD(+) = an oxidized flavin + NADH + 2 H(+). The protein operates within aromatic compound metabolism. Reductase component of a two-component system that catalyzes the first step in the aerobic styrene degradation pathway by enantioselective epoxidation of the vinyl side chain. Utilizes NADH to reduce FAD, which is then transferred to the styrene monooxygenase StyA. The polypeptide is NADH-dependent flavin reductase StyB (styB) (Pseudomonas fluorescens).